Consider the following 275-residue polypeptide: NH(3)-dependent NAD(+) synthetase (275 aa).

Residue 50 to 57 participates in ATP binding; the sequence is GISGGVDS. Aspartate 56 contacts Mg(2+). Arginine 147 contributes to the deamido-NAD(+) binding site. Threonine 167 is an ATP binding site. Glutamate 172 contributes to the Mg(2+) binding site. The deamido-NAD(+) site is built by lysine 180 and aspartate 187. The ATP site is built by lysine 196 and threonine 218. A deamido-NAD(+)-binding site is contributed by 267 to 268; the sequence is HK.

It belongs to the NAD synthetase family. In terms of assembly, homodimer.

It carries out the reaction deamido-NAD(+) + NH4(+) + ATP = AMP + diphosphate + NAD(+) + H(+). It participates in cofactor biosynthesis; NAD(+) biosynthesis; NAD(+) from deamido-NAD(+) (ammonia route): step 1/1. Its function is as follows. Catalyzes the ATP-dependent amidation of deamido-NAD to form NAD. Uses ammonia as a nitrogen source. This Pseudomonas syringae pv. tomato (strain ATCC BAA-871 / DC3000) protein is NH(3)-dependent NAD(+) synthetase.